A 431-amino-acid chain; its full sequence is Adenylosuccinate synthetase (431 aa).

GTP is bound by residues 12–18 and 40–42; these read GDEGKGK and GHT. The active-site Proton acceptor is Asp13. Mg(2+) contacts are provided by Asp13 and Gly40. IMP-binding positions include 13–16, 38–41, Thr129, Arg143, Gln224, Thr239, and Arg303; these read DEGK and NAGH. The Proton donor role is filled by His41. Position 299–305 (299–305) interacts with substrate; the sequence is VTTGRAR. Residues Arg305, 331–333, and 413–415 each bind GTP; these read KLD and GVG.

This sequence belongs to the adenylosuccinate synthetase family. As to quaternary structure, homodimer. It depends on Mg(2+) as a cofactor.

The protein localises to the cytoplasm. It catalyses the reaction IMP + L-aspartate + GTP = N(6)-(1,2-dicarboxyethyl)-AMP + GDP + phosphate + 2 H(+). It functions in the pathway purine metabolism; AMP biosynthesis via de novo pathway; AMP from IMP: step 1/2. Its function is as follows. Plays an important role in the de novo pathway of purine nucleotide biosynthesis. Catalyzes the first committed step in the biosynthesis of AMP from IMP. This Mycolicibacterium vanbaalenii (strain DSM 7251 / JCM 13017 / BCRC 16820 / KCTC 9966 / NRRL B-24157 / PYR-1) (Mycobacterium vanbaalenii) protein is Adenylosuccinate synthetase.